The sequence spans 507 residues: Arabinose import ATP-binding protein AraG (507 aa).

ABC transporter domains follow at residues 8–243 and 255–499; these read LSFH…MVGR and PHGE…MLRI. 40–47 lines the ATP pocket; the sequence is GENGAGKS.

It belongs to the ABC transporter superfamily. Arabinose importer (TC 3.A.1.2.2) family. In terms of assembly, the complex is composed of two ATP-binding proteins (AraG), two transmembrane proteins (AraH) and a solute-binding protein (AraF).

Its subcellular location is the cell inner membrane. It carries out the reaction L-arabinose(out) + ATP + H2O = L-arabinose(in) + ADP + phosphate + H(+). Its function is as follows. Part of the ABC transporter complex AraFGH involved in arabinose import. Responsible for energy coupling to the transport system. The sequence is that of Arabinose import ATP-binding protein AraG from Pectobacterium atrosepticum (strain SCRI 1043 / ATCC BAA-672) (Erwinia carotovora subsp. atroseptica).